Here is a 314-residue protein sequence, read N- to C-terminus: Glyceraldehyde-3-phosphate dehydrogenase A, chloroplastic (314 aa).

Residues 5 to 6, Asp-29, and Arg-74 contribute to the NADP(+) site; that span reads RI. An intrachain disulfide couples Cys-13 to Cys-283. Residues 147 to 149, Thr-178, Arg-193, 206 to 207, and Arg-229 each bind D-glyceraldehyde 3-phosphate; these read SCT and TG. Catalysis depends on Cys-148, which acts as the Nucleophile. Asn-311 is an NADP(+) binding site.

This sequence belongs to the glyceraldehyde-3-phosphate dehydrogenase family. Homotetramer.

It localises to the plastid. It is found in the chloroplast. It catalyses the reaction D-glyceraldehyde 3-phosphate + phosphate + NADP(+) = (2R)-3-phospho-glyceroyl phosphate + NADPH + H(+). Its pathway is carbohydrate biosynthesis; Calvin cycle. This chain is Glyceraldehyde-3-phosphate dehydrogenase A, chloroplastic (GapA), found in Scenedesmus vacuolatus (Green alga).